Reading from the N-terminus, the 389-residue chain is uncharacterized protein (389 aa).

Residues 1–23 (MHFAKLGAIGLLGSIICAYAASA) form the signal peptide.

Belongs to the IUNH family.

Its subcellular location is the endoplasmic reticulum lumen. This is an uncharacterized protein from Schizosaccharomyces pombe (strain 972 / ATCC 24843) (Fission yeast).